Here is a 225-residue protein sequence, read N- to C-terminus: Recoverin family protein DDB_G0274781 (225 aa).

Over residues 1–13 (MGNKQGKSPNNSK) the composition is skewed to low complexity. Residues 1–20 (MGNKQGKSPNNSKGGKKYKI) form a disordered region. Glycine 2 carries the N-myristoyl glycine lipid modification. 3 EF-hand domains span residues 78 to 113 (DNSP…LCKG), 114 to 149 (TAEE…AWIS), and 174 to 209 (MAQI…HPKI). Residues aspartate 91, asparagine 93, aspartate 95, threonine 97, glutamate 102, aspartate 127, aspartate 129, asparagine 131, tyrosine 133, glutamate 138, aspartate 187, asparagine 189, aspartate 191, lysine 193, and glutamate 198 each coordinate Ca(2+).

This sequence belongs to the recoverin family.

This is Recoverin family protein DDB_G0274781 from Dictyostelium discoideum (Social amoeba).